Here is a 20-residue protein sequence, read N- to C-terminus: T cell receptor alpha joining 42 (20 aa).

The segment at 1–20 is disordered; it reads YGGSQGNLIFGKGTKLSVKP.

As to quaternary structure, alpha-beta TR is a heterodimer composed of an alpha and beta chain; disulfide-linked. The alpha-beta TR is associated with the transmembrane signaling CD3 coreceptor proteins to form the TR-CD3 (TcR or TCR). The assembly of alpha-beta TR heterodimers with CD3 occurs in the endoplasmic reticulum where a single alpha-beta TR heterodimer associates with one CD3D-CD3E heterodimer, one CD3G-CD3E heterodimer and one CD247 homodimer forming a stable octameric structure. CD3D-CD3E and CD3G-CD3E heterodimers preferentially associate with TR alpha and TR beta chains, respectively. The association of the CD247 homodimer is the last step of TcR assembly in the endoplasmic reticulum and is required for transport to the cell surface.

The protein resides in the cell membrane. Its function is as follows. J region of the variable domain of T cell receptor (TR) alpha chain that participates in the antigen recognition. Alpha-beta T cell receptors are antigen specific receptors which are essential to the immune response and are present on the cell surface of T lymphocytes. Recognize peptide-major histocompatibility (MH) (pMH) complexes that are displayed by antigen presenting cells (APC), a prerequisite for efficient T cell adaptive immunity against pathogens. Binding of alpha-beta TR to pMH complex initiates TR-CD3 clustering on the cell surface and intracellular activation of LCK that phosphorylates the ITAM motifs of CD3G, CD3D, CD3E and CD247 enabling the recruitment of ZAP70. In turn, ZAP70 phosphorylates LAT, which recruits numerous signaling molecules to form the LAT signalosome. The LAT signalosome propagates signal branching to three major signaling pathways, the calcium, the mitogen-activated protein kinase (MAPK) kinase and the nuclear factor NF-kappa-B (NF-kB) pathways, leading to the mobilization of transcription factors that are critical for gene expression and essential for T cell growth and differentiation. The T cell repertoire is generated in the thymus, by V-(D)-J rearrangement. This repertoire is then shaped by intrathymic selection events to generate a peripheral T cell pool of self-MH restricted, non-autoaggressive T cells. Post-thymic interaction of alpha-beta TR with the pMH complexes shapes TR structural and functional avidity. This is T cell receptor alpha joining 42 from Homo sapiens (Human).